The primary structure comprises 431 residues: Citrate synthase (431 aa).

Residues histidine 306 and aspartate 364 contribute to the active site.

This sequence belongs to the citrate synthase family.

It catalyses the reaction oxaloacetate + acetyl-CoA + H2O = citrate + CoA + H(+). It participates in carbohydrate metabolism; tricarboxylic acid cycle; isocitrate from oxaloacetate: step 1/2. In Bartonella henselae (strain ATCC 49882 / DSM 28221 / CCUG 30454 / Houston 1) (Rochalimaea henselae), this protein is Citrate synthase (gltA).